A 386-amino-acid polypeptide reads, in one-letter code: Succinate--CoA ligase [ADP-forming] subunit beta (386 aa).

In terms of domain architecture, ATP-grasp spans 9-244 (KHILSRFGVS…YDEEIKEEIE (236 aa)). ATP contacts are provided by residues Lys46, 53–55 (GRG), Glu99, Cys102, and Glu107. Mg(2+) is bound by residues Asn199 and Asp213. Residues Asn264 and 320–322 (GIM) each bind substrate.

Belongs to the succinate/malate CoA ligase beta subunit family. In terms of assembly, heterotetramer of two alpha and two beta subunits. The cofactor is Mg(2+).

It carries out the reaction succinate + ATP + CoA = succinyl-CoA + ADP + phosphate. The catalysed reaction is GTP + succinate + CoA = succinyl-CoA + GDP + phosphate. It functions in the pathway carbohydrate metabolism; tricarboxylic acid cycle; succinate from succinyl-CoA (ligase route): step 1/1. In terms of biological role, succinyl-CoA synthetase functions in the citric acid cycle (TCA), coupling the hydrolysis of succinyl-CoA to the synthesis of either ATP or GTP and thus represents the only step of substrate-level phosphorylation in the TCA. The beta subunit provides nucleotide specificity of the enzyme and binds the substrate succinate, while the binding sites for coenzyme A and phosphate are found in the alpha subunit. In Ehrlichia canis (strain Jake), this protein is Succinate--CoA ligase [ADP-forming] subunit beta.